Here is a 356-residue protein sequence, read N- to C-terminus: Holliday junction branch migration complex subunit RuvB (356 aa).

Residues aspartate 4–tyrosine 192 are large ATPase domain (RuvB-L). ATP is bound by residues leucine 31, arginine 32, glycine 73, lysine 76, threonine 77, threonine 78, glutamate 139–phenylalanine 141, arginine 182, tyrosine 192, and arginine 229. Threonine 77 is a Mg(2+) binding site. Positions glutamate 193–glutamate 263 are small ATPAse domain (RuvB-S). Positions alanine 266–alanine 356 are head domain (RuvB-H). 3 residues coordinate DNA: arginine 302, arginine 321, and arginine 326.

It belongs to the RuvB family. Homohexamer. Forms an RuvA(8)-RuvB(12)-Holliday junction (HJ) complex. HJ DNA is sandwiched between 2 RuvA tetramers; dsDNA enters through RuvA and exits via RuvB. An RuvB hexamer assembles on each DNA strand where it exits the tetramer. Each RuvB hexamer is contacted by two RuvA subunits (via domain III) on 2 adjacent RuvB subunits; this complex drives branch migration. In the full resolvosome a probable DNA-RuvA(4)-RuvB(12)-RuvC(2) complex forms which resolves the HJ.

It is found in the cytoplasm. It carries out the reaction ATP + H2O = ADP + phosphate + H(+). In terms of biological role, the RuvA-RuvB-RuvC complex processes Holliday junction (HJ) DNA during genetic recombination and DNA repair, while the RuvA-RuvB complex plays an important role in the rescue of blocked DNA replication forks via replication fork reversal (RFR). RuvA specifically binds to HJ cruciform DNA, conferring on it an open structure. The RuvB hexamer acts as an ATP-dependent pump, pulling dsDNA into and through the RuvAB complex. RuvB forms 2 homohexamers on either side of HJ DNA bound by 1 or 2 RuvA tetramers; 4 subunits per hexamer contact DNA at a time. Coordinated motions by a converter formed by DNA-disengaged RuvB subunits stimulates ATP hydrolysis and nucleotide exchange. Immobilization of the converter enables RuvB to convert the ATP-contained energy into a lever motion, pulling 2 nucleotides of DNA out of the RuvA tetramer per ATP hydrolyzed, thus driving DNA branch migration. The RuvB motors rotate together with the DNA substrate, which together with the progressing nucleotide cycle form the mechanistic basis for DNA recombination by continuous HJ branch migration. Branch migration allows RuvC to scan DNA until it finds its consensus sequence, where it cleaves and resolves cruciform DNA. The polypeptide is Holliday junction branch migration complex subunit RuvB (Streptomyces avermitilis (strain ATCC 31267 / DSM 46492 / JCM 5070 / NBRC 14893 / NCIMB 12804 / NRRL 8165 / MA-4680)).